The following is an 879-amino-acid chain: Levansucrase (879 aa).

The first 37 residues, 1–37 (MTKEHKKMYKAGKYWAVATLVSASILMEVGVTTHADA), serve as a signal peptide directing secretion. 7 tandem repeats follow at residues 66-81 (DNAT…SIAN), 82-97 (DNAT…SIAN), 98-113 (DNAT…SIAN), 114-129 (DNAT…SVAN), 130-145 (DNAT…SVAN), 146-161 (DNAT…SVAN), and 162-177 (DNAT…SVAN). Positions 66 to 177 (DNATSGSTKQ…STKQESSVAN (112 aa)) are 7 X 16 AA tandem repeats of D-N-A-T-S-G-S-T-K-Q-E-S-S-[IV]-A-N. Polar residues-rich tracts occupy residues 66 to 180 (DNAT…NDTK) and 189 to 213 (NTSN…AATQ). The interval 66–213 (DNATSGSTKQ…NNEQPSAATQ (148 aa)) is disordered. 3 residues coordinate sucrose: W311, D312, and S382. D312 functions as the Nucleophile in the catalytic mechanism. A Ca(2+)-binding site is contributed by D460. Sucrose is bound by residues R465 and D466. 4 residues coordinate Ca(2+): Q491, L528, N530, and D562. Position 563 (E563) interacts with sucrose. The Proton donor/acceptor role is filled by E565. R583 lines the sucrose pocket. Residues 743 to 830 (SSGLGLKPHQ…TPAKPVQAGQ (88 aa)) are disordered. Residues 754–821 (VNPSQPTTPA…KPVNPSQPTT (68 aa)) show a composition bias toward polar residues. The short motif at 841-845 (LPQTG) is the LPXTG sorting signal element. At T844 the chain carries Pentaglycyl murein peptidoglycan amidated threonine. A propeptide spans 845–879 (GENNSQSQTMSFIGILLAMFGSLLGFLGIKKRRND) (removed by sortase).

Belongs to the glycosyl hydrolase 68 family.

It is found in the secreted. Its subcellular location is the cell wall. The enzyme catalyses [6)-beta-D-fructofuranosyl-(2-&gt;](n) alpha-D-glucopyranoside + sucrose = [6)-beta-D-fructofuranosyl-(2-&gt;](n+1) alpha-D-glucopyranoside + D-glucose. Its activity is regulated as follows. Ca(2+) may play an important structural role and promote stability of levansucrase. Fructosyltransferase that catalyzes the polymerization of the fructose moiety of sucrose to produce levan polymer and the fructo-oligosaccharide (FOS) 1-kestose. Also displays sucrose hydrolase activity. This chain is Levansucrase, found in Fructilactobacillus sanfranciscensis (Lactobacillus sanfranciscensis).